The following is a 514-amino-acid chain: Inosine-5'-monophosphate dehydrogenase (514 aa).

CBS domains follow at residues 112–171 (FISK…DTPV) and 175–233 (MTRR…PHST). NAD(+)-binding positions include 270 to 272 (DSS) and 320 to 322 (GMG). K(+) contacts are provided by Gly322 and Gly324. Residue Ser325 coordinates IMP. Residue Cys327 participates in K(+) binding. The Thioimidate intermediate role is filled by Cys327. Residues 360–362 (DGG), 383–384 (GG), and 407–411 (YRGMG) each bind IMP. Residue Arg425 is the Proton acceptor of the active site. Gln437 provides a ligand contact to IMP. K(+) contacts are provided by Glu496, Gly497, and Gly498. The short motif at 512-514 (AKM) is the Microbody targeting signal element.

This sequence belongs to the IMPDH/GMPR family. In terms of assembly, heterotetramer. Interacts with glycosomal protein sorting receptor PEX5. It depends on K(+) as a cofactor.

It is found in the glycosome. The catalysed reaction is IMP + NAD(+) + H2O = XMP + NADH + H(+). The protein operates within purine metabolism; XMP biosynthesis via de novo pathway; XMP from IMP: step 1/1. Mycophenolic acid (MPA) is a non-competitive inhibitor that prevents formation of the closed enzyme conformation by binding to the same site as the amobile flap. In contrast, mizoribine monophosphate (MZP) is a competitive inhibitor that induces the closed conformation. MPA is a potent inhibitor of mammalian IMPDHs but a poor inhibitor of the bacterial enzymes. MZP is a more potent inhibitor of bacterial IMPDH. Potently inhibited by MPA. Inhibited by XMP and GMP. Catalyzes the conversion of inosine 5'-phosphate (IMP) to xanthosine 5'-phosphate (XMP), the first committed and rate-limiting step in the de novo synthesis of guanine nucleotides, and therefore plays an important role in the regulation of cell growth. This chain is Inosine-5'-monophosphate dehydrogenase, found in Leishmania donovani.